Consider the following 402-residue polypeptide: MNLALFIIFATIFENVVPENCPKMYRRLSKSHTFCTPSTCKIEAGGKVTESDKQTILETHNQLRNKLATGKENQYQKLSSAANMMQMEWDDELAAVAQAHANQCKFEHDSGDQRAVGNFSVGQNLLETSGIFSIDWGKVKIWYTTEVDDFYPEYNKPFQFHGSYGHFSQVIWAKTWKVGCGVAGYVENGVKKVLYTCNYGPAGNLVGSEAYQVGSPCSACPENTKCSATYPGLCKSITPDGPQIRRPSSKDYLLYCDFSDKDPKACKDVTMTGSRPFTTQKLYTGKYVTQVFNAGENMTINFGKFEHKGGLCAFLIGRFGPNVAGETAASEVNFHFSAPHLIFPEGMKETRPITSWHTIGILMRWDKELQISYVFKVKPPTAKPPPQYFEFKEYGVKGGSCP.

An N-terminal signal peptide occupies residues 1–13; it reads MNLALFIIFATIF. The SCP domain maps to 57–199; sequence LETHNQLRNK…VKKVLYTCNY (143 aa).

This sequence belongs to the CRISP family. Post-translationally, contains 7 disulfide bonds. Expressed by the venom gland.

It localises to the secreted. This Tityus serrulatus (Brazilian scorpion) protein is Cysteine-rich venom protein.